The chain runs to 80 residues: Gamma-conotoxin PnVIIA (80 aa).

The N-terminal stretch at 1–19 (MEKLTILLLVAAVLMSTQA) is a signal peptide. Positions 20–43 (QNQEQRQQAKINFLSKRKPSAERW) are excised as a propeptide. 3 disulfides stabilise this stretch: cysteine 47-cysteine 61, cysteine 54-cysteine 65, and cysteine 60-cysteine 70. The residue at position 59 (glutamate 59) is a 4-carboxyglutamate. The residue at position 71 (glutamate 71) is a 4-carboxyglutamate. Proline 76 is subject to 4-hydroxyproline. A propeptide spanning residues 78–80 (FGA) is cleaved from the precursor.

As to expression, expressed by the venom duct.

The protein localises to the secreted. Functionally, gamma-conotoxins may act on voltage-gated non-specific cation pacemaker channels (HCN). Triggers depolarization and firing of action potential bursts in the caudodorsal neurons of lymnaea. This effect is due to activation or enhancement of a slow inward cation current that may underlie endogenous bursting activity of these neurons. The chain is Gamma-conotoxin PnVIIA from Conus pennaceus (Feathered cone).